A 134-amino-acid polypeptide reads, in one-letter code: Sec-independent protein translocase protein TatB (134 aa).

A helical membrane pass occupies residues 2-22 (FDGIGFMELLLIGILGLVVLG). The segment at 90-134 (AESVNRPYKVEDTSPVAPKASPDESPSVVEAKSSEATSENSSTPK) is disordered. Residues 123–134 (SEATSENSSTPK) show a composition bias toward polar residues.

Belongs to the TatB family. As to quaternary structure, the Tat system comprises two distinct complexes: a TatABC complex, containing multiple copies of TatA, TatB and TatC subunits, and a separate TatA complex, containing only TatA subunits. Substrates initially bind to the TatABC complex, which probably triggers association of the separate TatA complex to form the active translocon.

The protein resides in the cell inner membrane. Part of the twin-arginine translocation (Tat) system that transports large folded proteins containing a characteristic twin-arginine motif in their signal peptide across membranes. Together with TatC, TatB is part of a receptor directly interacting with Tat signal peptides. TatB may form an oligomeric binding site that transiently accommodates folded Tat precursor proteins before their translocation. In Shewanella frigidimarina (strain NCIMB 400), this protein is Sec-independent protein translocase protein TatB.